Reading from the N-terminus, the 122-residue chain is Small ribosomal subunit protein bS16 (122 aa).

The disordered stretch occupies residues 87–122; sequence VGKAKQAEARKAGAKNVAKQAAEAKAEETPADNTEA.

Belongs to the bacterial ribosomal protein bS16 family.

In Prochlorococcus marinus (strain MIT 9303), this protein is Small ribosomal subunit protein bS16.